The sequence spans 227 residues: Cytidylate kinase (227 aa).

10–18 (GPASSGKST) lines the ATP pocket.

Belongs to the cytidylate kinase family. Type 1 subfamily.

Its subcellular location is the cytoplasm. The enzyme catalyses CMP + ATP = CDP + ADP. The catalysed reaction is dCMP + ATP = dCDP + ADP. This chain is Cytidylate kinase, found in Streptococcus mutans serotype c (strain ATCC 700610 / UA159).